Consider the following 125-residue polypeptide: Putative iron-sulfur cluster insertion protein ErpA 2 (125 aa).

Residues cysteine 53, cysteine 117, and cysteine 119 each contribute to the iron-sulfur cluster site.

It belongs to the HesB/IscA family. Homodimer. Iron-sulfur cluster serves as cofactor.

In terms of biological role, required for insertion of 4Fe-4S clusters. The protein is Putative iron-sulfur cluster insertion protein ErpA 2 of Polaromonas naphthalenivorans (strain CJ2).